The primary structure comprises 449 residues: Methylenetetrahydrofolate--tRNA-(uracil-5-)-methyltransferase TrmFO (449 aa).

Residue 9–14 participates in FAD binding; the sequence is GGGMAG.

The protein belongs to the MnmG family. TrmFO subfamily. The cofactor is FAD.

The protein localises to the cytoplasm. The enzyme catalyses uridine(54) in tRNA + (6R)-5,10-methylene-5,6,7,8-tetrahydrofolate + NADH + H(+) = 5-methyluridine(54) in tRNA + (6S)-5,6,7,8-tetrahydrofolate + NAD(+). The catalysed reaction is uridine(54) in tRNA + (6R)-5,10-methylene-5,6,7,8-tetrahydrofolate + NADPH + H(+) = 5-methyluridine(54) in tRNA + (6S)-5,6,7,8-tetrahydrofolate + NADP(+). Functionally, catalyzes the folate-dependent formation of 5-methyl-uridine at position 54 (M-5-U54) in all tRNAs. This is Methylenetetrahydrofolate--tRNA-(uracil-5-)-methyltransferase TrmFO from Ruegeria pomeroyi (strain ATCC 700808 / DSM 15171 / DSS-3) (Silicibacter pomeroyi).